Here is a 140-residue protein sequence, read N- to C-terminus: Vesicle transport protein GOT1 (140 aa).

Helical transmembrane passes span 12 to 32 (IGLG…IFVF), 35 to 55 (GLIA…IGIN), 71 to 91 (ISFG…GLLL), and 96 to 116 (FLVL…RIPL).

The protein belongs to the GOT1 family. As to quaternary structure, homodimer. No interactions with STL1, STL2, CESA1, CESA3, CESA4, CESA6, CESA7 or CESA8.

It is found in the golgi apparatus membrane. In terms of biological role, may be involved in fusion of ER-derived transport vesicles with the Golgi complex. This is Vesicle transport protein GOT1 from Arabidopsis thaliana (Mouse-ear cress).